Here is a 511-residue protein sequence, read N- to C-terminus: MMKMRWLSAAVMLTLYTSSSWAFSIDDVAKQAQSLAGKGYETPKSNLPSVFRDMKYADYQQIQFNHDKAYWNNLKTPFKLEFYHQGMYFDTPVKINEVTATAVKRIKYSPDYFTFGDVQHDKDTVKDLGFAGFKVLYPINSKDKNDEIVSMLGASYFRVIGAGQVYGLSARGLAIDTALPSGEEFPRFKEFWIERPKPTDKRLTIYALLDSPRATGAYKFVVMPGRDTVVDVQSKIYLRDKVGKLGVAPLTSMFLFGPNQPSPANNYRPELHDSNGLSIHAGNGEWIWRPLNNPKHLAVSSFSMENPQGFGLLQRGRDFSRFEDLDDRYDLRPSAWVTPKGEWGKGSVELVEIPTNDETNDNIVAYWTPDQLPEPGKEMNFKYTITFSRDEDKLHAPDNAWVQQTRRSTGDVKQSNLIRQPDGTIAFVVDFTGAEMKKLPEDTPVTAQTSIGDNGEIVESTVRYNPVTKGWRLVMRVKVKDAKKTTEMRAALVNADQTLSETWSYQLPANE.

An N-terminal signal peptide occupies residues 1 to 22 (MMKMRWLSAAVMLTLYTSSSWA).

The protein belongs to the OpgD/OpgG family.

The protein localises to the periplasm. The protein operates within glycan metabolism; osmoregulated periplasmic glucan (OPG) biosynthesis. Its function is as follows. Involved in the biosynthesis of osmoregulated periplasmic glucans (OPGs). In Escherichia coli (strain K12 / MC4100 / BW2952), this protein is Glucans biosynthesis protein G.